The sequence spans 959 residues: Translation initiation factor IF-2 (959 aa).

Residues 33 to 373 are disordered; the sequence is SHASSVEEAD…PVTERKFHEL (341 aa). A compositionally biased stretch (polar residues) spans 46 to 60; it reads IASSFSAGVTKNVQA. Residues 63–73 show a composition bias toward basic and acidic residues; sequence AKDKQVAEQKA. A compositionally biased stretch (low complexity) spans 76-100; the sequence is AKATTPQPAASKAAEKPAAATQEAS. Composition is skewed to basic and acidic residues over residues 112–125, 134–143, and 179–192; these read FKAEREARAKEQVA, SNDRKSDYRQ, and NDGHRQAGNRDKNR. A compositionally biased stretch (polar residues) spans 193 to 211; that stretch reads SFNANSRQQDIGRQGQTQA. Composition is skewed to basic and acidic residues over residues 234 to 258 and 266 to 276; these read ARQRESRFREQEEAKRLEQQARQEA and QTEDKKHREAP. Low complexity predominate over residues 277–287; that stretch reads AKATEPAEPVA. The span at 306–323 shows a compositional bias: basic and acidic residues; it reads NRPDKAHDRDHGLEDGQK. Over residues 328–346 the composition is skewed to low complexity; the sequence is SWNSQNQVRNQKNSNWNNN. The span at 347 to 357 shows a compositional bias: basic residues; sequence KKNKKGKHHKN. The region spanning 460 to 629 is the tr-type G domain; sequence ERAPVVTIMG…LLVAEVEELK (170 aa). Residues 469 to 476 form a G1 region; it reads GHVDHGKT. A GTP-binding site is contributed by 469-476; the sequence is GHVDHGKT. A G2 region spans residues 494–498; the sequence is GITQH. Residues 515-518 form a G3 region; it reads DTPG. GTP contacts are provided by residues 515 to 519 and 569 to 572; these read DTPGH and NKID. A G4 region spans residues 569–572; sequence NKID. A G5 region spans residues 605–607; the sequence is SAK.

Belongs to the TRAFAC class translation factor GTPase superfamily. Classic translation factor GTPase family. IF-2 subfamily.

The protein resides in the cytoplasm. One of the essential components for the initiation of protein synthesis. Protects formylmethionyl-tRNA from spontaneous hydrolysis and promotes its binding to the 30S ribosomal subunits. Also involved in the hydrolysis of GTP during the formation of the 70S ribosomal complex. The protein is Translation initiation factor IF-2 of Streptococcus equi subsp. zooepidemicus (strain H70).